The following is a 148-amino-acid chain: Ribose-5-P isomerase B (148 aa).

A D-ribulose 5-phosphate-binding site is contributed by 8-9 (DE). Cysteine 65 (proton acceptor) is an active-site residue. Residues 66–70 (GTGIG), asparagine 99, arginine 132, and lysine 136 each bind D-ribulose 5-phosphate.

The protein belongs to the LacAB/RpiB family.

The catalysed reaction is aldehydo-D-ribose 5-phosphate = D-ribulose 5-phosphate. The protein operates within carbohydrate degradation; pentose phosphate pathway; D-ribose 5-phosphate from D-ribulose 5-phosphate (non-oxidative stage): step 1/1. Its function is as follows. Catalyzes the interconversion of ribulose-5-P and ribose-5-P. This Listeria innocua serovar 6a (strain ATCC BAA-680 / CLIP 11262) protein is Ribose-5-P isomerase B.